The chain runs to 490 residues: Asparagine--tRNA ligase (490 aa).

This sequence belongs to the class-II aminoacyl-tRNA synthetase family. Homodimer.

It localises to the cytoplasm. The enzyme catalyses tRNA(Asn) + L-asparagine + ATP = L-asparaginyl-tRNA(Asn) + AMP + diphosphate + H(+). This is Asparagine--tRNA ligase from Rhodopirellula baltica (strain DSM 10527 / NCIMB 13988 / SH1).